A 523-amino-acid chain; its full sequence is GMP synthase [glutamine-hydrolyzing] (523 aa).

In terms of domain architecture, Glutamine amidotransferase type-1 spans 8–205; sequence KILILDFGSQ…VVDICGCETN (198 aa). Cysteine 85 functions as the Nucleophile in the catalytic mechanism. Active-site residues include histidine 179 and glutamate 181. The GMPS ATP-PPase domain maps to 206-398; the sequence is WTAENIIEDA…LGLPAEMLNR (193 aa). 233 to 239 contacts ATP; the sequence is SGGVDSS.

In terms of assembly, homodimer.

The catalysed reaction is XMP + L-glutamine + ATP + H2O = GMP + L-glutamate + AMP + diphosphate + 2 H(+). Its pathway is purine metabolism; GMP biosynthesis; GMP from XMP (L-Gln route): step 1/1. Its function is as follows. Catalyzes the synthesis of GMP from XMP. The chain is GMP synthase [glutamine-hydrolyzing] from Histophilus somni (strain 2336) (Haemophilus somnus).